A 156-amino-acid polypeptide reads, in one-letter code: Small ribosomal subunit protein uS7 (156 aa).

Belongs to the universal ribosomal protein uS7 family. As to quaternary structure, part of the 30S ribosomal subunit. Contacts proteins S9 and S11.

Its function is as follows. One of the primary rRNA binding proteins, it binds directly to 16S rRNA where it nucleates assembly of the head domain of the 30S subunit. Is located at the subunit interface close to the decoding center, probably blocks exit of the E-site tRNA. This is Small ribosomal subunit protein uS7 from Roseobacter denitrificans (strain ATCC 33942 / OCh 114) (Erythrobacter sp. (strain OCh 114)).